We begin with the raw amino-acid sequence, 287 residues long: Elongation factor Ts (287 aa).

The tract at residues 80-83 (TDFL) is involved in Mg(2+) ion dislocation from EF-Tu.

The protein belongs to the EF-Ts family.

It localises to the cytoplasm. In terms of biological role, associates with the EF-Tu.GDP complex and induces the exchange of GDP to GTP. It remains bound to the aminoacyl-tRNA.EF-Tu.GTP complex up to the GTP hydrolysis stage on the ribosome. The sequence is that of Elongation factor Ts from Pseudomonas putida (strain GB-1).